The sequence spans 342 residues: AA9 family lytic polysaccharide monooxygenase H (342 aa).

Positions 1–19 are cleaved as a signal peptide; it reads MSKASALLAGLTGAALVAA. Residues H20 and H106 each coordinate Cu(2+). 2 disulfide bridges follow: C75–C195 and C117–C121. O2-binding residues include H181 and Q190. A Cu(2+)-binding site is contributed by Y192. The segment at 263 to 308 is disordered; that stretch reads ATVPGGGGANPTATTTAATSAAPSTTLRTTTTSAAQTTAPPSGDVQ. Positions 272–305 are enriched in low complexity; it reads NPTATTTAATSAAPSTTLRTTTTSAAQTTAPPSG. The 37-residue stretch at 306–342 folds into the CBM1 domain; it reads DVQTKYGQCGGNGWTGPTVCAPGSSCSVLNEWYSQCL.

It belongs to the polysaccharide monooxygenase AA9 family. Requires Cu(2+) as cofactor.

The protein resides in the secreted. The enzyme catalyses [(1-&gt;4)-beta-D-glucosyl]n+m + reduced acceptor + O2 = 4-dehydro-beta-D-glucosyl-[(1-&gt;4)-beta-D-glucosyl]n-1 + [(1-&gt;4)-beta-D-glucosyl]m + acceptor + H2O.. The presence of lignin presents a significant source of antioxidants, which probably increase the activity by trapping liberated oxidized fragments. Lytic polysaccharide monooxygenase (LPMO) that depolymerizes crystalline and amorphous polysaccharides via the oxidation of scissile alpha- or beta-(1-4)-glycosidic bonds, yielding C1 or C4 oxidation products. Catalysis by LPMOs requires the reduction of the active-site copper from Cu(II) to Cu(I) by a reducing agent and H(2)O(2) or O(2) as a cosubstrate. Hydrolyzes weakly barley beta-glucan, carboxymethyl cellulose, lichenan, wheat arabinoxylan and birchwood xylan. Stimulates the hydrolysis of lignocellulosic substrates (such as hydrothermal pretreated wheat straw or steam-pretreated spruce), when combined with other cellulolytic enzymes. The sequence is that of AA9 family lytic polysaccharide monooxygenase H from Thermothelomyces thermophilus (strain ATCC 42464 / BCRC 31852 / DSM 1799) (Sporotrichum thermophile).